Reading from the N-terminus, the 187-residue chain is Ribosome-recycling factor (187 aa).

It belongs to the RRF family.

The protein resides in the cytoplasm. In terms of biological role, responsible for the release of ribosomes from messenger RNA at the termination of protein biosynthesis. May increase the efficiency of translation by recycling ribosomes from one round of translation to another. The chain is Ribosome-recycling factor from Bradyrhizobium sp. (strain BTAi1 / ATCC BAA-1182).